The following is a 344-amino-acid chain: Dimethyladenosine transferase 1, mitochondrial (344 aa).

A mitochondrion-targeting transit peptide spans 1 to 27 (MATPGALAKFRLPPLPTIGEIVKLFNL). S-adenosyl-L-methionine contacts are provided by Asn36, Leu38, Gly63, Glu85, Lys86, Asp111, Ile112, and Asn141.

This sequence belongs to the class I-like SAM-binding methyltransferase superfamily. rRNA adenine N(6)-methyltransferase family. KsgA subfamily.

It is found in the mitochondrion. It carries out the reaction adenosine(N)/adenosine(N+1) in rRNA + 4 S-adenosyl-L-methionine = N(6)-dimethyladenosine(N)/N(6)-dimethyladenosine(N+1) in rRNA + 4 S-adenosyl-L-homocysteine + 4 H(+). Mitochondrial methyltransferase which uses S-adenosyl methionine to dimethylate two highly conserved adjacent adenosine residues (A1583 and A1584) within the loop of helix 45 at the 3-prime end of 12S rRNA, thereby regulating the assembly or stability of the small subunit of the mitochondrial ribosome. Also required for basal transcription of mitochondrial DNA, probably via its interaction with POLRMT and TFAM. Stimulates transcription independently of the methyltransferase activity. In Xenopus laevis (African clawed frog), this protein is Dimethyladenosine transferase 1, mitochondrial (tfb1m.L).